The following is a 169-amino-acid chain: 6,7-dimethyl-8-ribityllumazine synthase (169 aa).

5-amino-6-(D-ribitylamino)uracil is bound by residues phenylalanine 24, 58-60 (ALE), and 82-84 (AVV). A (2S)-2-hydroxy-3-oxobutyl phosphate-binding site is contributed by 87-88 (ET). Histidine 90 serves as the catalytic Proton donor. Asparagine 115 serves as a coordination point for 5-amino-6-(D-ribitylamino)uracil. Arginine 129 provides a ligand contact to (2S)-2-hydroxy-3-oxobutyl phosphate.

This sequence belongs to the DMRL synthase family.

It catalyses the reaction (2S)-2-hydroxy-3-oxobutyl phosphate + 5-amino-6-(D-ribitylamino)uracil = 6,7-dimethyl-8-(1-D-ribityl)lumazine + phosphate + 2 H2O + H(+). It participates in cofactor biosynthesis; riboflavin biosynthesis; riboflavin from 2-hydroxy-3-oxobutyl phosphate and 5-amino-6-(D-ribitylamino)uracil: step 1/2. In terms of biological role, catalyzes the formation of 6,7-dimethyl-8-ribityllumazine by condensation of 5-amino-6-(D-ribitylamino)uracil with 3,4-dihydroxy-2-butanone 4-phosphate. This is the penultimate step in the biosynthesis of riboflavin. This is 6,7-dimethyl-8-ribityllumazine synthase from Cupriavidus metallidurans (strain ATCC 43123 / DSM 2839 / NBRC 102507 / CH34) (Ralstonia metallidurans).